We begin with the raw amino-acid sequence, 264 residues long: Type 1 encapsulin shell protein (264 aa).

The protein belongs to the encapsulin family. Family 1 subfamily. In terms of assembly, forms hollow shells composed of 60 subunits. Monomers probably form pentamers which assemble into the shell. There are 12 pores where the pentamers meet as well as 3-fold axis channels and dimer channels; none are larger than 3-4 Angstroms in diameter. The N-terminus of the protein is inside the shell, the C-terminus is outside.

It localises to the encapsulin nanocompartment. Functionally, shell component of a type 1 encapsulin nanocompartment. Assembles into proteinaceous shells 21-24 nm in diameter. Empty organelles can be expressed in E.coli. Cargo proteins (DypB) are targeted to the interior via their C-terminal extensions. The chain is Type 1 encapsulin shell protein from Rhodococcus erythropolis (strain PR4 / NBRC 100887).